We begin with the raw amino-acid sequence, 221 residues long: Oxaloacetate tautomerase FAHD1, mitochondrial (221 aa).

The N-terminal 24 residues, 1 to 24 (MASTKPLSRFWEWGKNIVCVGRNY), are a transit peptide targeting the mitochondrion. Position 37 is a phosphoserine (Ser37). The Mg(2+) site is built by Glu68, Glu70, and Asp99. Lys110 is subject to N6-acetyllysine. Residue Lys112 is modified to N6-succinyllysine.

It belongs to the FAH family. Homodimer. Requires Mg(2+) as cofactor. The cofactor is Mn(2+).

The protein localises to the mitochondrion. It is found in the cytoplasm. Its subcellular location is the cytosol. It carries out the reaction oxaloacetate = enol-oxaloacetate. The catalysed reaction is oxaloacetate + H(+) = pyruvate + CO2. It catalyses the reaction a 3-acylpyruvate + H2O = a carboxylate + pyruvate + H(+). The enzyme catalyses acetylpyruvate + H2O = acetate + pyruvate + H(+). It carries out the reaction 3-fumarylpyruvate + H2O = fumarate + pyruvate + H(+). Oxaloacetate decarboxylation is competitively inhibited by oxalate. Its function is as follows. Tautomerase that converts enol-oxaloacetate, a strong inhibitor of succinate dehydrogenase, to the physiological keto form of oxaloacetate. It is thereby required to maximize aerobic respiration efficiency by preventing succinate dehydrogenase inhibition. Also acts as a weak oxaloacetate decarboxylase (ODx), catalyzing the decarboxylation of oxaloacetate (OAA) to pyruvate and CO(2), and as such is likely a regulatory enzyme in the TCA cycle. Also displays acylpyruvase activity, being able to hydrolyze acetylpyruvate and fumarylpyruvate in vitro. The chain is Oxaloacetate tautomerase FAHD1, mitochondrial from Rattus norvegicus (Rat).